The primary structure comprises 496 residues: Stomatal closure-related actin-binding protein 1 (496 aa).

Positions 126 to 269 (RNKDDVEEAI…FLQLQKKLAM (144 aa)) form a coiled coil.

This sequence belongs to the SCAB family. As to quaternary structure, dimer. Dimerization is required for actin-binding activity. In terms of tissue distribution, expressed in roots, stems, leaves, flowers, siliques and guard cells.

Its subcellular location is the cytoplasm. It localises to the cytoskeleton. Plant-specific actin binding protein that bundles and stabilizes microfilaments (MFs). Has no nucleation or capping activity. Regulates MF reorganization during stomatal closure. The binding to F-actin is insensitive to Ca(2+) and pH. Binds weakly to inositol phosphates. This chain is Stomatal closure-related actin-binding protein 1, found in Arabidopsis thaliana (Mouse-ear cress).